We begin with the raw amino-acid sequence, 285 residues long: MKKHKSSIKCFKIDQISQQPETDLVFTKRSECKVKDELFSDKENSILCKQLKELDLVVSSNKEFLNEKTSDQISFLKPRETVVEKKLANGSIWPNETSHLDKSRDLSSHSNGLDALAMTPYIVKENNKTHLSPRGNYPSEAEKSCDFYGQPLHFYRENTSPCLYGSSLSNVFTEKSSDYRHGLGSPTSLVSSNTASKLHLGRKDIVKLSELRNCINSSKDSNQIQELENLLRKEKQRNTEHEKIIRRMKKELKELHSQFNFAKKLFISALSANQDILDKMNDEFN.

Its subcellular location is the cytoplasm. Has a role in meiosis. The sequence is that of Meiotically up-regulated gene 74 protein (mug74) from Schizosaccharomyces pombe (strain 972 / ATCC 24843) (Fission yeast).